The following is an 81-amino-acid chain: Photosystem I iron-sulfur center (81 aa).

4Fe-4S ferredoxin-type domains follow at residues 2 to 31 (AHSV…MVPW) and 39 to 68 (IASA…VRVY). The [4Fe-4S] cluster site is built by cysteine 11, cysteine 14, cysteine 17, cysteine 21, cysteine 48, cysteine 51, cysteine 54, and cysteine 58.

In terms of assembly, the eukaryotic PSI reaction center is composed of at least 11 subunits. [4Fe-4S] cluster serves as cofactor.

The protein localises to the plastid. It is found in the chloroplast thylakoid membrane. It carries out the reaction reduced [plastocyanin] + hnu + oxidized [2Fe-2S]-[ferredoxin] = oxidized [plastocyanin] + reduced [2Fe-2S]-[ferredoxin]. Its function is as follows. Apoprotein for the two 4Fe-4S centers FA and FB of photosystem I (PSI); essential for photochemical activity. FB is the terminal electron acceptor of PSI, donating electrons to ferredoxin. The C-terminus interacts with PsaA/B/D and helps assemble the protein into the PSI complex. Required for binding of PsaD and PsaE to PSI. PSI is a plastocyanin-ferredoxin oxidoreductase, converting photonic excitation into a charge separation, which transfers an electron from the donor P700 chlorophyll pair to the spectroscopically characterized acceptors A0, A1, FX, FA and FB in turn. The protein is Photosystem I iron-sulfur center of Mesostigma viride (Green alga).